The sequence spans 294 residues: tRNA pseudouridine synthase B (294 aa).

Asp39 acts as the Nucleophile in catalysis.

This sequence belongs to the pseudouridine synthase TruB family. Type 1 subfamily.

It carries out the reaction uridine(55) in tRNA = pseudouridine(55) in tRNA. Functionally, responsible for synthesis of pseudouridine from uracil-55 in the psi GC loop of transfer RNAs. This is tRNA pseudouridine synthase B from Streptococcus pyogenes serotype M28 (strain MGAS6180).